A 681-amino-acid polypeptide reads, in one-letter code: Angiomotin-like 2b (681 aa).

The span at 68–84 shows a compositional bias: low complexity; that stretch reads GGGAASSSQSSSESLSQ. The segment at 68–106 is disordered; it reads GGGAASSSQSSSESLSQDEPHSPQLSTRQEPQGQEHQVD. A compositionally biased stretch (polar residues) spans 90–102; sequence PQLSTRQEPQGQE. Phosphotyrosine; by FGFR1 is present on tyrosine 126. Coiled-coil stretches lie at residues 268–319, 362–441, and 481–508; these read NACS…LMKG, IEKL…LQAT, and VYTLQENLREKEERILSLEADKIRWEQK. Residues 589 to 618 are disordered; it reads QLGALQPATADSSIISSHSTPAHTAQGKER. A compositionally biased stretch (polar residues) spans 597–611; sequence TADSSIISSHSTPAH. A PDZ-binding motif is present at residues 678 to 681; the sequence is EIFI.

The protein belongs to the angiomotin family. Interacts with SRC. In terms of processing, phosphorylation at Tyr-126 is necessary for efficient binding to SRC and synergistically functioning with SRC to activate the downstream MAPK pathway. Expressed in endothelial cells.

The protein localises to the recycling endosome. It is found in the cytoplasm. Its subcellular location is the cell projection. The protein resides in the podosome. It localises to the cell junction. In terms of biological role, required for proper architecture of actin filaments and for cell movements during embryogenesis. Plays a role in the radial actin fiber architecture in skin epithelial cells, thereby maintains cell geometry, size and cell interconnectivity within the skin. Plays an important role in coupling actin fibers to cell junctions in endothelial cells and is therefore required for correct endothelial cell morphology and maintenance of dorsal aorta lumen expansion during embryogenesis. May further play a role in the polarity, proliferation and migration of endothelial cells, and therefore participates in angiogenesis. May regulate the translocation of phosphorylated SRC to peripheral cell-matrix adhesion sites. In Danio rerio (Zebrafish), this protein is Angiomotin-like 2b.